The following is a 55-amino-acid chain: Large ribosomal subunit protein bL33 (55 aa).

The protein belongs to the bacterial ribosomal protein bL33 family.

The chain is Large ribosomal subunit protein bL33 from Chelativorans sp. (strain BNC1).